Here is a 159-residue protein sequence, read N- to C-terminus: Heavy metal-associated isoprenylated plant protein 28 (159 aa).

The HMA domain maps to 10–73 (LQTIEMRVHM…KVRKTGRRAE (64 aa)). Residues Cys21 and Cys24 each contribute to the a metal cation site. Cys156 is subject to Cysteine methyl ester. Cys156 carries S-farnesyl cysteine lipidation. The propeptide at 157–159 (SIM) is removed in mature form.

This sequence belongs to the HIPP family.

In terms of biological role, heavy-metal-binding protein. The polypeptide is Heavy metal-associated isoprenylated plant protein 28 (Arabidopsis thaliana (Mouse-ear cress)).